The sequence spans 339 residues: Very-long-chain 3-oxoacyl-CoA reductase (339 aa).

The chain crosses the membrane as a helical span at residues 21–41 (WTTFLLALGSFNALRIIYQTL). Positions 67, 96, 121, 148, 215, 219, 248, and 250 each coordinate NADP(+). Tyr-215 functions as the Proton acceptor in the catalytic mechanism. Residue Lys-219 is the Lowers pKa of active site Tyr of the active site.

It belongs to the short-chain dehydrogenases/reductases (SDR) family.

The protein localises to the endoplasmic reticulum membrane. It carries out the reaction a very-long-chain (3R)-3-hydroxyacyl-CoA + NADP(+) = a very-long-chain 3-oxoacyl-CoA + NADPH + H(+). It participates in lipid metabolism; fatty acid biosynthesis. Component of the microsomal membrane bound fatty acid elongation system, which produces the 26-carbon very long-chain fatty acids (VLCFA) from palmitate. Catalyzes the reduction of the 3-ketoacyl-CoA intermediate that is formed in each cycle of fatty acid elongation. VLCFAs serve as precursors for ceramide and sphingolipids. This chain is Very-long-chain 3-oxoacyl-CoA reductase, found in Coprinopsis cinerea (strain Okayama-7 / 130 / ATCC MYA-4618 / FGSC 9003) (Inky cap fungus).